Reading from the N-terminus, the 437-residue chain is Nuclear hormone receptor family member nhr-28 (437 aa).

Residues 5 to 80 (KSPCSVCGEA…VGMRKSAVQR (76 aa)) constitute a DNA-binding region (nuclear receptor). 2 consecutive NR C4-type zinc fingers follow at residues 8 to 28 (CSVC…CRAC) and 44 to 68 (CRAM…FTKC). The NR LBD domain occupies 115 to 376 (YEETGMPTLS…ETFYELVSGR (262 aa)).

The protein belongs to the nuclear hormone receptor family. In terms of tissue distribution, expressed in the pharynx, intestine and hypodermis.

The protein resides in the nucleus. Orphan nuclear receptor. The chain is Nuclear hormone receptor family member nhr-28 (nhr-28) from Caenorhabditis elegans.